The primary structure comprises 382 residues: Glucose-1-phosphate adenylyltransferase (382 aa).

Residues Tyr100, Gly165, 180-181 (EK), and Ser191 each bind alpha-D-glucose 1-phosphate.

It belongs to the bacterial/plant glucose-1-phosphate adenylyltransferase family. Homotetramer.

It catalyses the reaction alpha-D-glucose 1-phosphate + ATP + H(+) = ADP-alpha-D-glucose + diphosphate. It participates in glycan biosynthesis; glycogen biosynthesis. Functionally, involved in the biosynthesis of ADP-glucose, a building block required for the elongation reactions to produce glycogen. Catalyzes the reaction between ATP and alpha-D-glucose 1-phosphate (G1P) to produce pyrophosphate and ADP-Glc. The chain is Glucose-1-phosphate adenylyltransferase from Clostridium novyi (strain NT).